Consider the following 106-residue polypeptide: uncharacterized protein (106 aa).

This is an uncharacterized protein from Escherichia coli (strain K12).